Consider the following 398-residue polypeptide: Riboflavin biosynthesis protein RibBA (398 aa).

Residues 1 to 199 (MFHPIEEALE…IKDLIEYRYN (199 aa)) are DHBP synthase. Residues 26 to 27 (RE), Asp-31, 138 to 142 (RAGHT), and Glu-162 each bind D-ribulose 5-phosphate. Glu-27 is a binding site for Mg(2+). His-141 is a binding site for Mg(2+). The interval 200 to 398 (ITTLVNREVD…MKKLGHLLHF (199 aa)) is GTP cyclohydrolase II. 251–255 (RVHSE) contacts GTP. 3 residues coordinate Zn(2+): Cys-256, Cys-267, and Cys-269. GTP contacts are provided by residues Gln-272, 294 to 296 (EGR), and Thr-316. The Proton acceptor; for GTP cyclohydrolase activity role is filled by Asp-328. Arg-330 acts as the Nucleophile; for GTP cyclohydrolase activity in catalysis. GTP-binding residues include Thr-351 and Lys-356.

It in the N-terminal section; belongs to the DHBP synthase family. In the C-terminal section; belongs to the GTP cyclohydrolase II family. The cofactor is Mg(2+). Requires Mn(2+) as cofactor. Zn(2+) serves as cofactor.

It carries out the reaction D-ribulose 5-phosphate = (2S)-2-hydroxy-3-oxobutyl phosphate + formate + H(+). The enzyme catalyses GTP + 4 H2O = 2,5-diamino-6-hydroxy-4-(5-phosphoribosylamino)-pyrimidine + formate + 2 phosphate + 3 H(+). It functions in the pathway cofactor biosynthesis; riboflavin biosynthesis; 2-hydroxy-3-oxobutyl phosphate from D-ribulose 5-phosphate: step 1/1. It participates in cofactor biosynthesis; riboflavin biosynthesis; 5-amino-6-(D-ribitylamino)uracil from GTP: step 1/4. Catalyzes the conversion of D-ribulose 5-phosphate to formate and 3,4-dihydroxy-2-butanone 4-phosphate. Functionally, catalyzes the conversion of GTP to 2,5-diamino-6-ribosylamino-4(3H)-pyrimidinone 5'-phosphate (DARP), formate and pyrophosphate. The sequence is that of Riboflavin biosynthesis protein RibBA from Bacillus velezensis (strain DSM 23117 / BGSC 10A6 / LMG 26770 / FZB42) (Bacillus amyloliquefaciens subsp. plantarum).